The sequence spans 617 residues: MASKGGLKTIANEENEERFGYVFAVSGPVVTAEKMSGSAMYELVRVGYNELVGEIIRLEGDMATIQVYEETSGVTVGDPVLRTGKPLSVELGPGILGSIFDGIQRPLKDINELTQSIYIPKGVNVPSLAREVDWEFNPLNVKVGSHITGGDLYGIVHENTLVKHKMLMPPRAKGTVTYIAPAGNYKVTDVVLETEFDGEKAQYTMLQVWPVRQPRPVTEKLPANHPLLTGQRVLDSLFPCVQGGTTAIPGAFGCGKTVISQALSKYSNSDVIIYVGCGERGNEMSEVLRDFPELTVEIEGVTESIMKRTALVANTSNMPVAAREASIYTGITLSEYFRDMGYNVSMMADSTSRWAEALREISGRLAEMPADSGYPAYLGARLASFYERAGRVKCLGNPDREGSVSIVGAVSPPGGDFSDPVTAATLGIVQVFWGLDKKLAQRKHFPSINWLISYSKYMRALDDFYEKNYPEFVPLRTKVKEILQEEEDLSEIVQLVGKASLAETDKITLEVAKLLKDDFLQQNSYSSYDRFCPFYKTVGMLKNIISFYDMSRHAVESTAQSDNKVTWNVIRDAMGNVLYQLSSMKFKDPVKDGEAKIKADFDQLLEDMSAAFRNLED.

Residue glycine 250–threonine 257 coordinates ATP.

Belongs to the ATPase alpha/beta chains family. As to quaternary structure, V-ATPase is a heteromultimeric enzyme made up of two complexes: the ATP-hydrolytic V1 complex and the proton translocation V0 complex. The V1 complex consists of three catalytic AB heterodimers that form a heterohexamer, three peripheral stalks each consisting of EG heterodimers, one central rotor including subunits D and F, and the regulatory subunits C and H. The proton translocation complex V0 consists of the proton transport subunit a, a ring of proteolipid subunits c9c'', rotary subunit d, subunits e and f, and the accessory subunits VhaAC45 and ATP6AP2.

The enzyme catalyses ATP + H2O + 4 H(+)(in) = ADP + phosphate + 5 H(+)(out). Its activity is regulated as follows. ATP hydrolysis occurs at the interface between the nucleotide-binding domains of subunits A and B. ATP hydrolysis triggers a conformational change in the subunits D and F, which induces a shift of subunit d. The c-ring is subsequently rotated and results in a continuous proton translocation across the membrane. Functionally, catalytic subunit of the V1 complex of vacuolar(H+)-ATPase (V-ATPase), a multisubunit enzyme composed of a peripheral complex (V1) that hydrolyzes ATP and a membrane integral complex (V0) that translocates protons. V-ATPase is responsible for acidifying and maintaining the pH of intracellular compartments and in some cell types, is targeted to the plasma membrane, where it is responsible for acidifying the extracellular environment. The chain is V-type proton ATPase catalytic subunit A (VHAA) from Manduca sexta (Tobacco hawkmoth).